A 211-amino-acid polypeptide reads, in one-letter code: PITH domain-containing protein 1 (211 aa).

One can recognise a PITH domain in the interval 20 to 192; the sequence is EPPEQRGLAY…EVTICNYEAS (173 aa). A Phosphotyrosine modification is found at Y189.

This sequence belongs to the PITHD1 family. Down-regulated in primary acute myeloid leukemia (AML) patients.

The protein resides in the cytoplasm. Its function is as follows. Promotes megakaryocyte differentiation by up-regulating RUNX1 expression. Regulates RUNX1 expression by activating the proximal promoter of the RUNX1 gene and by enhancing the translation activity of an internal ribosome entry site (IRES) element in the RUNX1 gene. This Homo sapiens (Human) protein is PITH domain-containing protein 1 (PITHD1).